We begin with the raw amino-acid sequence, 229 residues long: Cytidylate kinase (229 aa).

10 to 18 (GYSSCGKST) is an ATP binding site.

Belongs to the cytidylate kinase family. Type 1 subfamily.

Its subcellular location is the cytoplasm. The catalysed reaction is CMP + ATP = CDP + ADP. It catalyses the reaction dCMP + ATP = dCDP + ADP. This is Cytidylate kinase from Phocaeicola vulgatus (strain ATCC 8482 / DSM 1447 / JCM 5826 / CCUG 4940 / NBRC 14291 / NCTC 11154) (Bacteroides vulgatus).